The primary structure comprises 171 residues: Protein TIFY 11d (171 aa).

In terms of domain architecture, Tify spans 65-100 (PSAGTAPLTIFYDGRMVVVDDVPVEKAAELMRLAGS). A Jas motif is present at residues 117-142 (PIARKASLQRFLQKRKHRITTTSEPY). A Nuclear localization signal motif is present at residues 119 to 126 (ARKASLQR).

Belongs to the TIFY/JAZ family. As to quaternary structure, interacts with BHLH148 and COI1A. Interacts with COI1A, COI1B and COI2 in a coronatine-dependent manner. Coronatine is an analog of jasmonoyl isoleucine (JA-Ile). In terms of processing, ubiquitinated. Increase in jasmonoyl isoleucine (JA-Ile) levels mediates its degradation via COI1A-mediated proteasome pathway.

Its subcellular location is the nucleus. In terms of biological role, repressor of jasmonate (JA) responses. May act on an initial response of JA-regulated gene expression toward drought tolerance as part of a BHLH148-TIFY11D/JAZ12-COI1A complex. This Oryza sativa subsp. japonica (Rice) protein is Protein TIFY 11d.